The following is a 440-amino-acid chain: G-protein coupled receptor family C group 5 member C (440 aa).

An N-terminal signal peptide occupies residues 1-22 (MATHRTLLMCLGLPLFFPGALA). Residues 23-49 (QNHAPPGCSPDLDPLYYNLCDRSGAWG) are Extracellular-facing. A helical transmembrane segment spans residues 50–70 (IVSEAVAGAGIITTFVLTIIL). The Cytoplasmic segment spans residues 71-84 (VASLPFVQDTKKRS). A helical membrane pass occupies residues 85–105 (LLGTQVFFLLGTLGLFCLVFA). The Extracellular portion of the chain corresponds to 106–119 (CVVKPDFSTCASRR). Residues 120–140 (FLFGVLFAICFSCLVAHVLSL) traverse the membrane as a helical segment. Residues 141–155 (NFLTRKNHGPRGWVI) lie on the Cytoplasmic side of the membrane. The chain crosses the membrane as a helical span at residues 156–176 (FTVALLLTLVEVIINTEWLII). Topologically, residues 177-207 (TLVRGGGQVSPLGNVSADSTMTSPCAIANMD) are extracellular. Asn-190 is a glycosylation site (N-linked (GlcNAc...) asparagine). A helical membrane pass occupies residues 208-228 (FVMALIYVMLLLLTAFLGAWP). The Cytoplasmic portion of the chain corresponds to 229-240 (TLCGRFKRWRKH). A helical transmembrane segment spans residues 241–261 (GVFVLLTTVISIAIWVVWIVM). Over 262–278 (YTYGNEQHHSPTWDDPT) the chain is Extracellular. A helical transmembrane segment spans residues 279 to 299 (LAIALAANAWTFVLFYVIPEV). Residues 300 to 440 (SQVTKPSPEQ…QVFRNPYVWD (141 aa)) are Cytoplasmic-facing. A phosphoserine mark is found at Ser-343, Ser-382, Ser-402, and Ser-405. Phosphotyrosine is present on Tyr-413. Position 422 is a phosphothreonine (Thr-422).

Belongs to the G-protein coupled receptor 3 family.

The protein localises to the cell membrane. Its function is as follows. This retinoic acid-inducible G-protein coupled receptor provide evidence for a possible interaction between retinoid and G-protein signaling pathways. The protein is G-protein coupled receptor family C group 5 member C (Gprc5c) of Mus musculus (Mouse).